A 410-amino-acid polypeptide reads, in one-letter code: Enterobactin exporter EntS (410 aa).

At 1–21 the chain is on the cytoplasmic side; it reads MNKQSWLLNLSLLKTHPAFRA. A helical transmembrane segment spans residues 22–42; the sequence is VFLARFISIVSLGLLGVAVPV. Over 43 to 55 the chain is Periplasmic; the sequence is QIQMMTHSTWQVG. Residues 56-76 form a helical membrane-spanning segment; the sequence is LSVTLTGGAMFVGLMVGGVLA. Residues 77-83 are Cytoplasmic-facing; sequence DRYERKK. Residues 84–104 form a helical membrane-spanning segment; it reads VILLARGTCGIGFIGLCLNAL. Residues 105–109 are Periplasmic-facing; sequence LPEPS. A helical transmembrane segment spans residues 110-130; it reads LLAIYLLGLWDGFFASLGVTA. The Cytoplasmic portion of the chain corresponds to 131–156; sequence LLAATSALVGRENLMQAGAITMLTVR. Residues 157–177 traverse the membrane as a helical segment; that stretch reads LGSVISPMIGGLLLATGGVAW. Residue Asn-178 is a topological domain, periplasmic. The helical transmembrane segment at 179–199 threads the bilayer; it reads YGLAAAGTFITLLPLLSLPEL. Residues 200–218 lie on the Cytoplasmic side of the membrane; the sequence is PPPPQPLEHPLKSLLAGFR. Residues 219 to 233 traverse the membrane as a helical segment; sequence FLLASPLLGGLLTMA. The Periplasmic portion of the chain corresponds to 234–250; sequence SAVLVLYPALADNWQMS. A helical transmembrane segment spans residues 251–271; sequence AAQIGFLYAAIPLGAAIGALT. At 272–281 the chain is on the cytoplasmic side; the sequence is SGKLAHSARP. A helical transmembrane segment spans residues 282–301; sequence GLLMLLSTLGSFLAIGLFGL. Residues 302-307 are Periplasmic-facing; the sequence is MPMWIL. The helical transmembrane segment at 308–330 threads the bilayer; that stretch reads GVVCLALFGWLSAVSSLLQYTML. The Cytoplasmic portion of the chain corresponds to 331–350; the sequence is QTQTPEAMLGRINGLWTAQN. Residues 351 to 371 traverse the membrane as a helical segment; it reads VTGDAIGAALLGGLGAMMTPV. Position 372 (Ala-372) is a topological domain, periplasmic. Residues 373-393 traverse the membrane as a helical segment; it reads SASASGFGLLIIGVLLLLVLV. Residues 394–410 lie on the Cytoplasmic side of the membrane; that stretch reads ELRRFRQTPPQVTASDS.

This sequence belongs to the major facilitator superfamily. EntS (TC 2.A.1.38) family.

It localises to the cell inner membrane. Component of an export pathway for enterobactin. The polypeptide is Enterobactin exporter EntS (Shigella flexneri).